A 731-amino-acid chain; its full sequence is 1,4-alpha-glucan branching enzyme GlgB (731 aa).

Catalysis depends on D411, which acts as the Nucleophile. The active-site Proton donor is E464.

It belongs to the glycosyl hydrolase 13 family. GlgB subfamily. Monomer.

It catalyses the reaction Transfers a segment of a (1-&gt;4)-alpha-D-glucan chain to a primary hydroxy group in a similar glucan chain.. Its pathway is glycan biosynthesis; glycogen biosynthesis. Its function is as follows. Catalyzes the formation of the alpha-1,6-glucosidic linkages in glycogen by scission of a 1,4-alpha-linked oligosaccharide from growing alpha-1,4-glucan chains and the subsequent attachment of the oligosaccharide to the alpha-1,6 position. This chain is 1,4-alpha-glucan branching enzyme GlgB, found in Mycolicibacterium paratuberculosis (strain ATCC BAA-968 / K-10) (Mycobacterium paratuberculosis).